The chain runs to 595 residues: Grainyhead-like protein 3 homolog (595 aa).

The interval Asp-29–Glu-92 is transcription activation. The Grh/CP2 DB domain maps to Ala-221 to Ile-454. A disordered region spans residues Ser-484–Ser-505.

It belongs to the grh/CP2 family. Grainyhead subfamily.

The protein resides in the nucleus. In terms of biological role, transcription factor playing important roles in primary neurulation and in the differentiation of stratified epithelia of both ectodermal and endodermal origin. Binds directly to the consensus DNA sequence 5'-AACCGGTT-3' acting as an activator and repressor on distinct target genes. The sequence is that of Grainyhead-like protein 3 homolog (grhl3) from Xenopus laevis (African clawed frog).